We begin with the raw amino-acid sequence, 253 residues long: Imidazole glycerol phosphate synthase subunit HisF (253 aa).

Catalysis depends on residues D11 and D130.

Belongs to the HisA/HisF family. As to quaternary structure, heterodimer of HisH and HisF.

Its subcellular location is the cytoplasm. The catalysed reaction is 5-[(5-phospho-1-deoxy-D-ribulos-1-ylimino)methylamino]-1-(5-phospho-beta-D-ribosyl)imidazole-4-carboxamide + L-glutamine = D-erythro-1-(imidazol-4-yl)glycerol 3-phosphate + 5-amino-1-(5-phospho-beta-D-ribosyl)imidazole-4-carboxamide + L-glutamate + H(+). Its pathway is amino-acid biosynthesis; L-histidine biosynthesis; L-histidine from 5-phospho-alpha-D-ribose 1-diphosphate: step 5/9. Its function is as follows. IGPS catalyzes the conversion of PRFAR and glutamine to IGP, AICAR and glutamate. The HisF subunit catalyzes the cyclization activity that produces IGP and AICAR from PRFAR using the ammonia provided by the HisH subunit. In Ruegeria pomeroyi (strain ATCC 700808 / DSM 15171 / DSS-3) (Silicibacter pomeroyi), this protein is Imidazole glycerol phosphate synthase subunit HisF.